Here is a 501-residue protein sequence, read N- to C-terminus: MVLWGPVLGALLVVIAGYLCLPGMLRQRRPWEPPLDKGTVPWLGHAMAFRKNMFEFLKRMRTKHGDVFTVQLGGQYFTFVMDPLSFGSILKDTQRKLDFGQYAKKLVLKVFGYRSVQGDHEMIHSASTKHLRGDGLKDLNETMLDSLSFVMLTSKGWSLDASCWHEDSLFRFCYYILFTAGYLSLFGYTKDKEQDLLQAGELFMEFRKFDLLFPRFVYSLLWPREWLEVGRLQRLFHKMLSVSHSQEKEGISNWLGNMLQFLREQGVPSAMQDKFNFMMLWASQGNTGPTSFWALLYLLKHPEAIRAVREEATQVLGEARLETKQSFAFKLGALQHTPVLDSVVEETLRLRAAPTLLRLVHEDYTLKMSSGQEYLFRHGDILALFPYLSVHMDPDIHPEPTVFKYDRFLNPNGSRKVDFFKTGKKIHHYTMPWGSGVSICPGRFFALSEVKLFILLMVTHFDLELVDPDTPLPHVDPQRWGFGTMQPSHDVRFRYRLHPTE.

The helical transmembrane segment at 1-21 threads the bilayer; that stretch reads MVLWGPVLGALLVVIAGYLCL. Phosphoserine is present on Ser-326. Cys-440 is a heme binding site.

It belongs to the cytochrome P450 family. The cofactor is heme. Liver.

The protein resides in the endoplasmic reticulum membrane. The protein localises to the microsome membrane. It catalyses the reaction 7alpha-hydroxycholest-4-en-3-one + reduced [NADPH--hemoprotein reductase] + O2 = 7alpha,12alpha-dihydroxycholest-4-en-3-one + oxidized [NADPH--hemoprotein reductase] + H2O + H(+). The enzyme catalyses 5beta-cholestane-3alpha,7alpha-diol + reduced [NADPH--hemoprotein reductase] + O2 = 5beta-cholestane-3alpha,7alpha,12alpha-triol + oxidized [NADPH--hemoprotein reductase] + H2O + H(+). It carries out the reaction chenodeoxycholate + reduced [NADPH--hemoprotein reductase] + O2 = cholate + oxidized [NADPH--hemoprotein reductase] + H2O + H(+). It participates in lipid metabolism; bile acid biosynthesis. A cytochrome P450 monooxygenase involved in primary bile acid biosynthesis. Catalyzes the 12alpha-hydroxylation of 7alpha-hydroxy-4-cholesten-3-one, an intermediate metabolite in cholic acid biosynthesis. Controls biliary balance of cholic acid and chenodeoxycholic acid, ultimately regulating the intestinal absorption of dietary lipids. Mechanistically, uses molecular oxygen inserting one oxygen atom into a substrate, and reducing the second into a water molecule, with two electrons provided by NADPH via cytochrome P450 reductase (CPR; NADPH--hemoprotein reductase). The polypeptide is 7-alpha-hydroxycholest-4-en-3-one 12-alpha-hydroxylase (Homo sapiens (Human)).